We begin with the raw amino-acid sequence, 1004 residues long: 2-oxoglutarate dehydrogenase E1 component (1004 aa).

This sequence belongs to the alpha-ketoglutarate dehydrogenase family. In terms of assembly, homodimer. Part of the 2-oxoglutarate dehydrogenase (OGDH) complex composed of E1 (2-oxoglutarate dehydrogenase), E2 (dihydrolipoamide succinyltransferase) and E3 (dihydrolipoamide dehydrogenase); the complex contains multiple copies of the three enzymatic components (E1, E2 and E3). The cofactor is thiamine diphosphate.

It carries out the reaction N(6)-[(R)-lipoyl]-L-lysyl-[protein] + 2-oxoglutarate + H(+) = N(6)-[(R)-S(8)-succinyldihydrolipoyl]-L-lysyl-[protein] + CO2. Its function is as follows. E1 component of the 2-oxoglutarate dehydrogenase (OGDH) complex which catalyzes the decarboxylation of 2-oxoglutarate, the first step in the conversion of 2-oxoglutarate to succinyl-CoA and CO(2). In Brucella suis (strain ATCC 23445 / NCTC 10510), this protein is 2-oxoglutarate dehydrogenase E1 component.